A 26-amino-acid chain; its full sequence is Melittin (26 aa).

Position 1 is an N-formylglycine; partial (G1). Residue E26 is modified to Glutamic acid 1-amide.

Belongs to the melittin family. As to quaternary structure, monomer (in solution and for integration into membranes), homotetramer (in solution and potentially as a toroidal pore in membranes), and potenially homomultimer (as a toroidal pore in membranes). In terms of tissue distribution, expressed by the venom gland.

Its subcellular location is the secreted. It is found in the target cell membrane. Main toxin of bee venom with strong hemolytic activity and antimicrobial activity. It has enhancing effects on bee venom phospholipase A2 activity. This amphipathic toxin binds to negatively charged membrane surface and forms pore by inserting into lipid bilayers inducing the leakage of ions and molecules and the enhancement of permeability that ultimately leads to cell lysis. It acts as a voltage-gated pore with higher selectivity for anions over cations. The ion conductance has been shown to be voltage-dependent. Self-association of melittin in membranes is promoted by high ionic strength, but not by the presence of negatively charged lipids. In vivo, intradermal injection into healthy human volunteers produce sharp pain sensation and an inflammatory response. It produces pain by activating primary nociceptor cells directly and indirectly due to its ability to activate plasma membrane phospholipase A2 and its pore-forming activity. This is Melittin (MELT) from Apis dorsata (Giant honeybee).